The following is a 187-amino-acid chain: Small ribosomal subunit protein uS7 (187 aa).

This sequence belongs to the universal ribosomal protein uS7 family. Part of the 30S ribosomal subunit.

Functionally, one of the primary rRNA binding proteins, it binds directly to 16S rRNA where it nucleates assembly of the head domain of the 30S subunit. Is located at the subunit interface close to the decoding center. The sequence is that of Small ribosomal subunit protein uS7 from Picrophilus torridus (strain ATCC 700027 / DSM 9790 / JCM 10055 / NBRC 100828 / KAW 2/3).